Reading from the N-terminus, the 216-residue chain is NKG2-D type II integral membrane protein (216 aa).

Topologically, residues 1–51 (MGWIRGRRSRHSWEMSEFHNYNLDLAKNDFSTRWQKQRCPVIKSKCRENTS) are cytoplasmic. The helical; Signal-anchor for type II membrane protein transmembrane segment at 52–72 (PLFFCCFIAVAMGIRFIVMVT) threads the bilayer. The Extracellular portion of the chain corresponds to 73–216 (IWSAVFLNSL…NTYICMQRTV (144 aa)). Cystine bridges form between C96/C105 and C99/C110. The C-type lectin domain occupies 98–213 (PCPKNWICYK…STPNTYICMQ (116 aa)). Residues N115, N131, N163, and N202 are each glycosylated (N-linked (GlcNAc...) asparagine). Cystine bridges form between C127–C211 and C189–C203.

Homodimer; disulfide-linked. Heterohexamer composed of two subunits of KLRK1 and four subunits of HCST/DAP10. Interacts (via transmembrane domain) with HCST/DAP10 (via transmembrane domain); the interaction is required for KLRK1 NK cell surface and induces NK cell-mediated cytotoxicity. Can form disulfide-bonded heterodimer with CD94. Interacts with CEACAM1; recruits PTPN6 that dephosphorylates VAV1.

It localises to the cell membrane. Functions as an activating and costimulatory receptor involved in immunosurveillance upon binding to various cellular stress-inducible ligands displayed at the surface of autologous tumor cells and virus-infected cells. Provides both stimulatory and costimulatory innate immune responses on activated killer (NK) cells, leading to cytotoxic activity. Acts as a costimulatory receptor for T-cell receptor (TCR) in CD8(+) T-cell-mediated adaptive immune responses by amplifying T-cell activation. Stimulates perforin-mediated elimination of ligand-expressing tumor cells. Signaling involves calcium influx, culminating in the expression of TNF-alpha. Participates in NK cell-mediated bone marrow graft rejection. May play a regulatory role in differentiation and survival of NK cells. Binds to ligands belonging to various subfamilies of MHC class I-related glycoproteins. The polypeptide is NKG2-D type II integral membrane protein (KLRK1) (Pongo pygmaeus (Bornean orangutan)).